The primary structure comprises 367 residues: DNA replication and repair protein RecF (367 aa).

31-38 (GENGSGKT) is an ATP binding site.

It belongs to the RecF family.

The protein localises to the cytoplasm. In terms of biological role, the RecF protein is involved in DNA metabolism; it is required for DNA replication and normal SOS inducibility. RecF binds preferentially to single-stranded, linear DNA. It also seems to bind ATP. The chain is DNA replication and repair protein RecF from Saccharophagus degradans (strain 2-40 / ATCC 43961 / DSM 17024).